Consider the following 828-residue polypeptide: Periplasmic nitrate reductase (828 aa).

The segment at residues 1–31 (MKLSRRSFMKANAVAAAAAAAGLSVPGVARA) is a signal peptide (tat-type signal). The 4Fe-4S Mo/W bis-MGD-type domain occupies 39-95 (IKWDKAPCRFCGTGCGVLVGTQQGRVVACQGDPDAPVNRGLNCIKGYFLPKIMYGKD). Positions 46, 49, 53, and 81 each coordinate [4Fe-4S] cluster. Residues lysine 83, glutamine 150, asparagine 175, cysteine 179, 212–219 (WGANMAEM), 243–247 (STYQH), 262–264 (QSD), methionine 372, glutamine 376, asparagine 482, 508–509 (SD), lysine 531, aspartate 558, and 718–727 (TGRVLEHWHT) contribute to the Mo-bis(molybdopterin guanine dinucleotide) site. Phenylalanine 794 is a binding site for substrate. The Mo-bis(molybdopterin guanine dinucleotide) site is built by asparagine 802 and lysine 819.

This sequence belongs to the prokaryotic molybdopterin-containing oxidoreductase family. NasA/NapA/NarB subfamily. As to quaternary structure, component of the periplasmic nitrate reductase NapAB complex composed of NapA and NapB. Requires [4Fe-4S] cluster as cofactor. It depends on Mo-bis(molybdopterin guanine dinucleotide) as a cofactor. In terms of processing, predicted to be exported by the Tat system. The position of the signal peptide cleavage has not been experimentally proven.

It is found in the periplasm. The enzyme catalyses 2 Fe(II)-[cytochrome] + nitrate + 2 H(+) = 2 Fe(III)-[cytochrome] + nitrite + H2O. Functionally, catalytic subunit of the periplasmic nitrate reductase complex NapAB. Receives electrons from NapB and catalyzes the reduction of nitrate to nitrite. This Escherichia coli O157:H7 (strain EC4115 / EHEC) protein is Periplasmic nitrate reductase.